Consider the following 364-residue polypeptide: Tyrosyl-DNA phosphodiesterase 2 (364 aa).

Met-1 is subject to N-acetylmethionine. Residues Met-1–Gly-10 are compositionally biased toward low complexity. The disordered stretch occupies residues Met-1–Glu-21. Lys-23 is covalently cross-linked (Glycyl lysine isopeptide (Lys-Gly) (interchain with G-Cter in SUMO2)). Residues Glu-68–Val-108 form a disordered region. Residues Thr-88 and Thr-92 each carry the phosphothreonine; by ACVR1B modification. At Ser-95 the chain carries Phosphoserine. Residues Asn-122–Leu-126 form an interaction with 5' end of substrate DNA region. Asp-124 and Glu-154 together coordinate Mg(2+). Residues His-228–Arg-233 form an interaction with 5' end of substrate DNA region. Residue Asp-264 is the Proton donor/acceptor of the active site. Positions Asn-266–Arg-268 are interaction with 5' end of substrate DNA.

Belongs to the CCR4/nocturin family. In terms of assembly, interacts with TRAF2, TRAF3, TRAF5, TRAF6, TNFRSF8/CD30, TNFRSF5/CD40, TNFRSF1B/TNF-R75, ETS1, ETS2, FLI1, SMAD3 and ACVR1B/ALK4. Mg(2+) is required as a cofactor. Requires Mn(2+) as cofactor. Post-translationally, ubiquitinated by TRAF6.

It localises to the nucleus. The protein localises to the PML body. The protein resides in the nucleolus. Its subcellular location is the cytoplasm. Functionally, DNA repair enzyme that can remove a variety of covalent adducts from DNA through hydrolysis of a 5'-phosphodiester bond, giving rise to DNA with a free 5' phosphate. Catalyzes the hydrolysis of dead-end complexes between DNA and the topoisomerase 2 (TOP2) active site tyrosine residue. The 5'-tyrosyl DNA phosphodiesterase activity can enable the repair of TOP2-induced DNA double-strand breaks/DSBs without the need for nuclease activity, creating a 'clean' DSB with 5'-phosphate termini that are ready for ligation. Thereby, protects the transcription of many genes involved in neurological development and maintenance from the abortive activity of TOP2. Hydrolyzes 5'-phosphoglycolates on protruding 5' ends on DSBs due to DNA damage by radiation and free radicals. Has preference for single-stranded DNA or duplex DNA with a 4 base pair overhang as substrate. Also has 3'-tyrosyl DNA phosphodiesterase activity, but less efficiently and much slower than TDP1. Constitutes the major if not only 5'-tyrosyl-DNA phosphodiesterase in cells. Also acts as an adapter by participating in the specific activation of MAP3K7/TAK1 in response to TGF-beta: associates with components of the TGF-beta receptor-TRAF6-TAK1 signaling module and promotes their ubiquitination dependent complex formation. Involved in non-canonical TGF-beta induced signaling routes. May also act as a negative regulator of ETS1 and may inhibit NF-kappa-B activation. Acts as a regulator of ribosome biogenesis following stress. The chain is Tyrosyl-DNA phosphodiesterase 2 (TDP2) from Bos taurus (Bovine).